Consider the following 69-residue polypeptide: Small integral membrane protein 20 (69 aa).

Residues 1–8 are Mitochondrial matrix-facing; the sequence is MAAARNLR. The chain crosses the membrane as a helical span at residues 9–29; the sequence is TALIFGGFISMVGAAFYPIYF. Over 30 to 69 the chain is Mitochondrial intermembrane; it reads RPLMRLEEYQKEQAVNRAGIVQEDVQPPGLKVWSDPFGRK. Phenylalanine 66 is subject to Phenylalanine amide.

As to quaternary structure, component of the MITRAC (mitochondrial translation regulation assembly intermediate of cytochrome c oxidase complex) complex, the core components of this complex being COA3/MITRAC12 and COX14. Interacts with COA3/MITRAC12 and COX4I1. Directly interacts with newly synthesized MT-CO1/COX1. Highly expressed in the hypothalamus, the spinal cord, and sensory ganglia (at protein level). Also expressed on in the epidermis and dermis layers of the skin (at protein level). Expressed in preadipocytes and adipocytes (at protein level). Expressed in the ovary, specifically in granulosa cells of follicles that have passed the primary stage and in oocytes (at protein level).

Its subcellular location is the mitochondrion inner membrane. It is found in the secreted. Component of the MITRAC (mitochondrial translation regulation assembly intermediate of cytochrome c oxidase complex) complex, that regulates cytochrome c oxidase assembly. Promotes the progression of complex assembly after the association of MT-CO1/COX1 with COX4I1 and COX6C. Chaperone-like assembly factor required to stabilize newly synthesized MT-CO1/COX1 and to prevent its premature turnover. Its function is as follows. Peptide involved in a broad spectrum of regulatory functions. Is a ligand for GPR173. As part of the reproductive cycle, it regulates gonadotropin-releasing hormone (GnRH) signaling in the hypothalamus and pituitary gland which augments the release of luteinizing hormone. More specifically, it regulates the expression of transcription factors CEBPB and POU2F1/OCT1 through the cAMP-PKA signaling pathway, which subsequently regulate the expression of GNRHR and KISS1. Plays a protective role in memory retention through activation of GNRHR. Regulates the secretion of AVP by hypothalamic neurons. Plays a role in the transduction of the itch sensation. Induces anxiolytic effects, reducing behavior associated with anxiety. Regulates food intake as well as satiation and satiety by increasing Nucb2 expression in neurons. In the ovary, it regulates follicular growth by stimulating granulosa cell proliferation by increasing the expression of GPR173, CREB1, CYP19A1, KITLG, FSHR, and LHCGR. It also increases the production of estradiol (E2). In the heart, it regulates contractility and relaxation by activating the AKT1-NOS3 and MAPK1-MAPK3 signaling pathways. It also plays a cardioprotective role during ischemia, where it activates the SAFE and RISK pathways. Stimulates the proliferation and differentiation of preadipocytes. In pancreatic islet cells, it induces proliferation of islet cells as well as the production of INS through activation of the MAPK1-MAPK3 signaling pathways. This is Small integral membrane protein 20 from Mus musculus (Mouse).